The sequence spans 177 residues: Dynein light chain Tctex-type 5-A (177 aa).

It belongs to the dynein light chain Tctex-type family.

The protein is Dynein light chain Tctex-type 5-A (Dynlt5-a) of Xenopus laevis (African clawed frog).